Reading from the N-terminus, the 368-residue chain is Homoserine O-acetyltransferase (368 aa).

In terms of domain architecture, AB hydrolase-1 spans 44 to 350; the sequence is NAILVAHAWT…AYGHDAFLLE (307 aa). S150 functions as the Nucleophile in the catalytic mechanism. R217 contacts substrate. Residues D311 and H344 contribute to the active site. D345 serves as a coordination point for substrate.

This sequence belongs to the AB hydrolase superfamily. MetX family. In terms of assembly, homodimer.

Its subcellular location is the cytoplasm. It catalyses the reaction L-homoserine + acetyl-CoA = O-acetyl-L-homoserine + CoA. It functions in the pathway amino-acid biosynthesis; L-methionine biosynthesis via de novo pathway; O-acetyl-L-homoserine from L-homoserine: step 1/1. In terms of biological role, transfers an acetyl group from acetyl-CoA to L-homoserine, forming acetyl-L-homoserine. This chain is Homoserine O-acetyltransferase, found in Geobacter sulfurreducens (strain ATCC 51573 / DSM 12127 / PCA).